A 400-amino-acid chain; its full sequence is Phosphoglycerate kinase (400 aa).

Residues D21–N23, R37, H60–R63, R121, and R154 contribute to the substrate site. ATP is bound by residues K204, E326, and G355–S358.

This sequence belongs to the phosphoglycerate kinase family. Monomer.

It is found in the cytoplasm. The enzyme catalyses (2R)-3-phosphoglycerate + ATP = (2R)-3-phospho-glyceroyl phosphate + ADP. It participates in carbohydrate degradation; glycolysis; pyruvate from D-glyceraldehyde 3-phosphate: step 2/5. The polypeptide is Phosphoglycerate kinase (Chloroflexus aurantiacus (strain ATCC 29366 / DSM 635 / J-10-fl)).